The sequence spans 173 residues: Co-chaperone protein HscB homolog (173 aa).

Residues 5 to 77 (SHFALFDLEP…SQRARYLLSL (73 aa)) form the J domain.

The protein belongs to the HscB family. In terms of assembly, interacts with HscA and stimulates its ATPase activity.

Functionally, co-chaperone involved in the maturation of iron-sulfur cluster-containing proteins. Seems to help targeting proteins to be folded toward HscA. This Azotobacter vinelandii (strain DJ / ATCC BAA-1303) protein is Co-chaperone protein HscB homolog.